The sequence spans 214 residues: Pyrrolidone-carboxylate peptidase 2 (214 aa).

Catalysis depends on residues E78, C141, and H165.

This sequence belongs to the peptidase C15 family. Homotetramer.

It is found in the cytoplasm. The catalysed reaction is Release of an N-terminal pyroglutamyl group from a polypeptide, the second amino acid generally not being Pro.. Functionally, removes 5-oxoproline from various penultimate amino acid residues except L-proline. The chain is Pyrrolidone-carboxylate peptidase 2 from Streptococcus pneumoniae serotype 4 (strain ATCC BAA-334 / TIGR4).